The primary structure comprises 429 residues: 4-hydroxy-3-methylbut-2-en-1-yl diphosphate synthase (flavodoxin) (429 aa).

[4Fe-4S] cluster-binding residues include Cys-317, Cys-320, Cys-363, and Glu-370.

This sequence belongs to the IspG family. The cofactor is [4Fe-4S] cluster.

It carries out the reaction (2E)-4-hydroxy-3-methylbut-2-enyl diphosphate + oxidized [flavodoxin] + H2O + 2 H(+) = 2-C-methyl-D-erythritol 2,4-cyclic diphosphate + reduced [flavodoxin]. It functions in the pathway isoprenoid biosynthesis; isopentenyl diphosphate biosynthesis via DXP pathway; isopentenyl diphosphate from 1-deoxy-D-xylulose 5-phosphate: step 5/6. Its function is as follows. Converts 2C-methyl-D-erythritol 2,4-cyclodiphosphate (ME-2,4cPP) into 1-hydroxy-2-methyl-2-(E)-butenyl 4-diphosphate. The sequence is that of 4-hydroxy-3-methylbut-2-en-1-yl diphosphate synthase (flavodoxin) from Deinococcus radiodurans (strain ATCC 13939 / DSM 20539 / JCM 16871 / CCUG 27074 / LMG 4051 / NBRC 15346 / NCIMB 9279 / VKM B-1422 / R1).